Consider the following 385-residue polypeptide: GDP-D-glucose phosphorylase 1 (385 aa).

His218 (tele-GMP-histidine intermediate) is an active-site residue.

This sequence belongs to the GDPGP1 family.

Its subcellular location is the cytoplasm. It carries out the reaction GDP-alpha-D-glucose + phosphate = alpha-D-glucose 1-phosphate + GDP + H(+). Its function is as follows. Specific and highly efficient GDP-D-glucose phosphorylase regulating the levels of GDP-D-glucose in cells. The chain is GDP-D-glucose phosphorylase 1 (GDPGP1) from Bos taurus (Bovine).